The sequence spans 350 residues: MIALRENIAEMAGYVPGFQPLDVASYIKLNTNENPYPPSPKVLEAIAKEAGEGLRRYPDAASVLAREEAAKVYGFDPSWIIMANGSDEVLNNLIRACAGEGEEIAFINPSYSYYGTLAEVQGARVRTFGLTESFEPEGIPEHYDGKLFFLTNPNAPLGFTYSQRYIADLAGRLSGVLVVDEAYVDFAEETSLDLVRSFDNVVVTRTFSKSYSLAGMRLGLAIARPELIAALNKIRDHYNLDRLAQAAAAAALADQPYFKECVRKIKETRAWFTAELQKFGYQVIPSSGNFVFASPPDRDGTRIYQGLYDRKILVRHFTDPKLAHGLRISIGSREEMEQTVKALRELGPGR.

N6-(pyridoxal phosphate)lysine is present on K209.

It belongs to the class-II pyridoxal-phosphate-dependent aminotransferase family. Histidinol-phosphate aminotransferase subfamily. As to quaternary structure, homodimer. It depends on pyridoxal 5'-phosphate as a cofactor.

It carries out the reaction L-histidinol phosphate + 2-oxoglutarate = 3-(imidazol-4-yl)-2-oxopropyl phosphate + L-glutamate. It functions in the pathway amino-acid biosynthesis; L-histidine biosynthesis; L-histidine from 5-phospho-alpha-D-ribose 1-diphosphate: step 7/9. The chain is Histidinol-phosphate aminotransferase from Geobacter sp. (strain M21).